The primary structure comprises 67 residues: DNA-directed RNA polymerase subunit omega (67 aa).

It belongs to the RNA polymerase subunit omega family. As to quaternary structure, the RNAP catalytic core consists of 2 alpha, 1 beta, 1 beta' and 1 omega subunit. When a sigma factor is associated with the core the holoenzyme is formed, which can initiate transcription.

The enzyme catalyses RNA(n) + a ribonucleoside 5'-triphosphate = RNA(n+1) + diphosphate. Promotes RNA polymerase assembly. Latches the N- and C-terminal regions of the beta' subunit thereby facilitating its interaction with the beta and alpha subunits. This chain is DNA-directed RNA polymerase subunit omega, found in Delftia acidovorans (strain DSM 14801 / SPH-1).